The sequence spans 945 residues: Isoleucine--tRNA ligase (945 aa).

The short motif at 66-76 is the 'HIGH' region element; sequence PYANGDIHLGH. Residue glutamate 581 participates in L-isoleucyl-5'-AMP binding. Residues 622–626 carry the 'KMSKS' region motif; the sequence is KMSKS. Residue lysine 625 coordinates ATP. Zn(2+)-binding residues include cysteine 908, cysteine 911, cysteine 928, and cysteine 931.

Belongs to the class-I aminoacyl-tRNA synthetase family. IleS type 1 subfamily. In terms of assembly, monomer. The cofactor is Zn(2+).

It localises to the cytoplasm. The enzyme catalyses tRNA(Ile) + L-isoleucine + ATP = L-isoleucyl-tRNA(Ile) + AMP + diphosphate. Functionally, catalyzes the attachment of isoleucine to tRNA(Ile). As IleRS can inadvertently accommodate and process structurally similar amino acids such as valine, to avoid such errors it has two additional distinct tRNA(Ile)-dependent editing activities. One activity is designated as 'pretransfer' editing and involves the hydrolysis of activated Val-AMP. The other activity is designated 'posttransfer' editing and involves deacylation of mischarged Val-tRNA(Ile). This Burkholderia ambifaria (strain ATCC BAA-244 / DSM 16087 / CCUG 44356 / LMG 19182 / AMMD) (Burkholderia cepacia (strain AMMD)) protein is Isoleucine--tRNA ligase.